A 132-amino-acid polypeptide reads, in one-letter code: Protein KRTCAP2 homolog (132 aa).

A run of 4 helical transmembrane segments spans residues 1–21 (MAVPTSVSLVLASVTAVLIFS), 35–55 (MATVFGGFLGSWLFILSLTAV), 69–89 (AKLFPEVAFCLIGSLFACGMV), and 92–109 (VCATTCILFSVAALYYIN).

Belongs to the KRTCAP2 family. Component of the oligosaccharyltransferase (OST) complex.

The protein resides in the membrane. Subunit of the oligosaccharyl transferase (OST) complex that catalyzes the initial transfer of a defined glycan (Glc(3)Man(9)GlcNAc(2) in eukaryotes) from the lipid carrier dolichol-pyrophosphate to an asparagine residue within an Asn-X-Ser/Thr consensus motif in nascent polypeptide chains, the first step in protein N-glycosylation. N-glycosylation occurs cotranslationally and the complex associates with the Sec61 complex at the channel-forming translocon complex that mediates protein translocation across the endoplasmic reticulum (ER). All subunits are required for a maximal enzyme activity. This is Protein KRTCAP2 homolog from Aedes aegypti (Yellowfever mosquito).